The chain runs to 501 residues: Glutamyl-tRNA(Gln) amidotransferase subunit A (501 aa).

Residues Lys80 and Ser155 each act as charge relay system in the active site. Catalysis depends on Ser179, which acts as the Acyl-ester intermediate.

The protein belongs to the amidase family. GatA subfamily. In terms of assembly, heterotrimer of A, B and C subunits.

It carries out the reaction L-glutamyl-tRNA(Gln) + L-glutamine + ATP + H2O = L-glutaminyl-tRNA(Gln) + L-glutamate + ADP + phosphate + H(+). Its function is as follows. Allows the formation of correctly charged Gln-tRNA(Gln) through the transamidation of misacylated Glu-tRNA(Gln) in organisms which lack glutaminyl-tRNA synthetase. The reaction takes place in the presence of glutamine and ATP through an activated gamma-phospho-Glu-tRNA(Gln). The sequence is that of Glutamyl-tRNA(Gln) amidotransferase subunit A from Cupriavidus pinatubonensis (strain JMP 134 / LMG 1197) (Cupriavidus necator (strain JMP 134)).